The primary structure comprises 398 residues: MSFNRDDDSKLKFKTSKKLKVSATFESMNLKPDLLRGIYFYGFEYPSSIQSRAISQIISGKDVIAQAQSGTGKTATFTIGLLQAIDSKSKELQALVLSPTRELASQSESVISNLGDYLNVTAHACTGGKALQQDIKKVSKNCQVVSGTPGRVLDMIKRQVLNVRNCKILVLDEADELLGETLGFKQQIYDIFTKLPPTIQVVVVSATMSKDILEITKKFMSDPVKILVKRDEISLDVIKQYYVDVEKEEWKFDTLCDLYDSLTITQCVIFCNTRKKVDWLSRKLTQTNFSVSSMHGDMKQEERDQVMNDFRSGKARVLISTDVWARGIDVQQISLVINYDIPDNLENYIHRIGRSGRFGRKGVAINFITKEERPKLKEIESHYRIKIKPTPANLEELS.

Residues 23 to 51 (ATFESMNLKPDLLRGIYFYGFEYPSSIQS) carry the Q motif motif. The region spanning 54-226 (ISQIISGKDV…KKFMSDPVKI (173 aa)) is the Helicase ATP-binding domain. Position 67-74 (67-74 (AQSGTGKT)) interacts with ATP. Residues 172–175 (DEAD) carry the DEAD box motif. The Helicase C-terminal domain occupies 237 to 398 (VIKQYYVDVE…PTPANLEELS (162 aa)).

Belongs to the DEAD box helicase family. DDX48/FAL1 subfamily.

It localises to the nucleus. Its subcellular location is the nucleolus. It carries out the reaction ATP + H2O = ADP + phosphate + H(+). Its function is as follows. ATP-dependent RNA helicase involved in 40S ribosomal subunit biogenesis. Required for the processing and cleavage of 35S pre-rRNA at sites A0, A1, and A2, leading to mature 18S rRNA. The polypeptide is ATP-dependent RNA helicase FAL1 (FAL1) (Kluyveromyces lactis (strain ATCC 8585 / CBS 2359 / DSM 70799 / NBRC 1267 / NRRL Y-1140 / WM37) (Yeast)).